The sequence spans 723 residues: Dipeptidyl aminopeptidase BI (723 aa).

An N-terminal signal peptide occupies residues 1 to 23 (MKPTSLLLAATVLMSTPITSALA). Active-site charge relay system residues include S574, D659, and H694.

This sequence belongs to the peptidase S9A family. In terms of assembly, monomer.

With respect to regulation, nearly completely inhibited by 0.5 mM ZnCl(2), 0.1 mM N-tosyl-L-lysyl chloromethyl ketone (TLCK) and 0.1 mM leupeptin. Strongly inhibited by 0.5 mM CoCl(2) and 0.1 mM chymostatin. Activity is hardly affected by general serine protease inhibitors phenylmethanesulfonyl fluoride (PMSF), diisopropyl fluorophosphate (DFP) and N-tosyl-L-phenyl-alanyl chloromethyl ketone (TPCK) or by aspartyl protease inhibitor pepstatin A or by CaCl(2) and EDTA. Cysteine protease inhibitors, such as N-ethylmaleimide (NEM), iodoacetic acid and L-trans-epoxysuccinyl-leucylamido(4-guanido)butane (E-64) have no effect on activity. In terms of biological role, sequentially removes dipeptide units (NH3-P2-P1-) from the amino termini of peptides and proteins. Is able to catalyze the removal of Asp-Arg from the amino termini of angiotensins I and II. Has slight endopeptidase activity on N-terminally blocked peptide derivatives which contain arginine residues at the P1 position. Does not hydrolyze Ala-Ala-Ala and Ala-Ala-Ala-Ala substrates or insulin beta chain. This chain is Dipeptidyl aminopeptidase BI, found in Pseudoxanthomonas mexicana.